The following is a 325-amino-acid chain: Methionyl-tRNA formyltransferase (325 aa).

112–115 (SLLP) contacts (6S)-5,6,7,8-tetrahydrofolate.

Belongs to the Fmt family.

It carries out the reaction L-methionyl-tRNA(fMet) + (6R)-10-formyltetrahydrofolate = N-formyl-L-methionyl-tRNA(fMet) + (6S)-5,6,7,8-tetrahydrofolate + H(+). Functionally, attaches a formyl group to the free amino group of methionyl-tRNA(fMet). The formyl group appears to play a dual role in the initiator identity of N-formylmethionyl-tRNA by promoting its recognition by IF2 and preventing the misappropriation of this tRNA by the elongation apparatus. This Roseiflexus sp. (strain RS-1) protein is Methionyl-tRNA formyltransferase.